A 79-amino-acid chain; its full sequence is UPF0154 protein lwe1321 (79 aa).

The helical transmembrane segment at 2–22 (WIYILVGIICLLAGLAGGFFI) threads the bilayer. Over residues 57-66 (KINQMMSAMN) the composition is skewed to polar residues. The disordered stretch occupies residues 57-79 (KINQMMSAMNKQQEKEKPKKAKK).

It belongs to the UPF0154 family.

The protein localises to the cell membrane. In Listeria welshimeri serovar 6b (strain ATCC 35897 / DSM 20650 / CCUG 15529 / CIP 8149 / NCTC 11857 / SLCC 5334 / V8), this protein is UPF0154 protein lwe1321.